A 190-amino-acid polypeptide reads, in one-letter code: Secretory phospholipase A2 (190 aa).

A signal peptide spans 1-15; that stretch reads MKLAYFSSLLPLALA. An intrachain disulfide couples Cys62 to Cys78. Ca(2+) is bound at residue Ala65. His81 is an active-site residue. Asp82 lines the Ca(2+) pocket.

Belongs to the phospholipase A2 family. Requires Ca(2+) as cofactor.

Its subcellular location is the lipid droplet. The protein resides in the secreted. The enzyme catalyses a 1,2-diacyl-sn-glycero-3-phosphocholine + H2O = a 1-acyl-sn-glycero-3-phosphocholine + a fatty acid + H(+). Its function is as follows. Secretory phospholipase that catalyzes the calcium-dependent hydrolysis of the 2-acyl groups in 3-sn-phosphoglycerides. Increases the ability to utilize insect-derived nutrients and lipids, and promotes lipid dropplets accumulation. Plays a role in virulence, including more efficient penetration of the insect cuticle and evasion of host immune response by repressing the expression of host immunity genes. This Beauveria bassiana (strain ARSEF 2860) (White muscardine disease fungus) protein is Secretory phospholipase A2.